The sequence spans 149 residues: L-alanine exporter AlaE (149 aa).

The next 4 helical transmembrane spans lie at 16–36 (FAMV…LSGM), 46–66 (LVAI…RDAI), 85–105 (VLAY…TVGA), and 112–132 (AAVS…GYFL).

It belongs to the AlaE exporter family.

It localises to the cell inner membrane. Exports L-alanine. The polypeptide is L-alanine exporter AlaE (Citrobacter koseri (strain ATCC BAA-895 / CDC 4225-83 / SGSC4696)).